The primary structure comprises 298 residues: uncharacterized protein (298 aa).

A run of 10 helical transmembrane segments spans residues 5–23 (ILVS…YFST), 33–52 (IFGY…VTLF), 72–91 (ALSY…LFLW), 101–120 (VSFG…RVFF), 127–145 (FKFI…NIVL), 149–166 (LSWE…YFSI), 175–194 (LASF…YFAL), 207–229 (FIWG…YVIA), 238–260 (LGLL…GEQI), and 265–284 (YPLF…DGVY). One can recognise an EamA domain in the interval 13-144 (FLFGYMYYFS…ATLGVISNIV (132 aa)).

It belongs to the EamA transporter family.

The protein localises to the cell membrane. This is an uncharacterized protein from Haemophilus influenzae (strain ATCC 51907 / DSM 11121 / KW20 / Rd).